Here is a 516-residue protein sequence, read N- to C-terminus: Alpha-(1-&gt;6)-mannopyranosyltransferase A (516 aa).

N-acetylthreonine is present on T2. The next 13 helical transmembrane spans lie at 38–58, 78–98, 112–132, 174–194, 198–218, 232–252, 278–298, 326–346, 350–370, 385–405, 414–434, 454–474, and 477–497; these read ARLG…AGSV, GLVL…LAWL, FTMR…VPVF, ITTA…TVIV, VVAG…LLVW, PTAL…MGGV, IILI…LPFL, LLIF…GLGW, LAGS…ANVI, LLRI…PLLW, AALT…PAAL, AIAA…PDGS, and MYSW…WYVL.

It belongs to the MptA/B family.

It localises to the membrane. Its function is as follows. Involved in the latter stages of the biosynthesis of the alpha-(1-&gt;6) mannan core of lipomannan (LM). Catalyzes the addition of alpha-(1-&gt;6)-mannose residue. This chain is Alpha-(1-&gt;6)-mannopyranosyltransferase A (mptA), found in Mycobacterium tuberculosis (strain ATCC 25618 / H37Rv).